Here is a 696-residue protein sequence, read N- to C-terminus: Spermatogenesis-associated protein 21 (696 aa).

2 disordered regions span residues 1 to 301 (MDNR…AAGT) and 329 to 386 (LKAR…SVPT). Residues 67–86 (KGPRYRDTFKEGPSELRTQE) show a composition bias toward basic and acidic residues. Residues 96 to 116 (KQSSWVPQEGSQELQAGQDQS) show a composition bias toward polar residues. A compositionally biased stretch (basic and acidic residues) spans 195-209 (GDKRPKEADVPHIRP). Residues 223–235 (DSSQEAMPPTSTV) are compositionally biased toward polar residues. Residues 275-287 (EVRDIGERREPDR) show a composition bias toward basic and acidic residues. Composition is skewed to low complexity over residues 288 to 297 (VQQQPQKPVV) and 339 to 366 (SPRT…SGPS). Residues 424–451 (EPEEQSLQKLYQNREKSEEQLTLKQEEA) are a coiled coil. The EF-hand domain maps to 481 to 516 (VTPAQVEDALMSADVNGDGHVDFKDFLAVMTDTRRF). Ca(2+) contacts are provided by Asp-494, Asn-496, Asp-498, His-500, and Asp-505. Residues 646–696 (KPTNHYVQDQCTTPGLAPDIRSPFFQSRSQGNREHNSDSRKWPSSVPSRTH) form a disordered region. The segment covering 676-686 (GNREHNSDSRK) has biased composition (basic and acidic residues).

Its function is as follows. Involved in the differentiation of haploid spermatids. The sequence is that of Spermatogenesis-associated protein 21 (SPATA21) from Macaca fascicularis (Crab-eating macaque).